We begin with the raw amino-acid sequence, 420 residues long: Sodium/proton antiporter 2 (420 aa).

The next 11 helical transmembrane spans lie at 25–45, 60–80, 94–114, 136–156, 173–193, 221–241, 242–262, 285–305, 321–341, 363–383, and 400–420; these read IALLMAVSLWVVRSIETSVEI, IVFYMLGAMTIVEIIDAHQGF, ILLWVIGFATFFLSSVLDNLT, LGAVVVIAANAGGAWTPIGDV, IKNLFLPSAISLVVPLALMSL, LVFGVGFGALLFVPLFKSLTG, LPPYMGILLGLGVIWILTDVI, GALFFLGILLSMSSLDAAGIL, LIASIIGVVSAIIDNVPLVAA, FCAGTGGSMLITGSAAGVIFM, and FAFAGFTAGIMTYLAVHNFPL.

The protein belongs to the NhaD Na(+)/H(+) (TC 2.A.62) antiporter family.

It is found in the membrane. Functionally, na(+)/H(+) antiporter that extrudes sodium in exchange for external protons. In Arabidopsis thaliana (Mouse-ear cress), this protein is Sodium/proton antiporter 2.